The primary structure comprises 238 residues: Uridylate kinase (238 aa).

Lys12 to Gly15 provides a ligand contact to ATP. Gly54 provides a ligand contact to UMP. Gly55 and Arg59 together coordinate ATP. Residues Asp74 and Thr135–Thr142 each bind UMP. ATP contacts are provided by Thr162, Asn163, Tyr168, and Asp171.

It belongs to the UMP kinase family. As to quaternary structure, homohexamer.

The protein localises to the cytoplasm. It carries out the reaction UMP + ATP = UDP + ADP. The protein operates within pyrimidine metabolism; CTP biosynthesis via de novo pathway; UDP from UMP (UMPK route): step 1/1. Its activity is regulated as follows. Inhibited by UTP. Its function is as follows. Catalyzes the reversible phosphorylation of UMP to UDP. The sequence is that of Uridylate kinase from Azorhizobium caulinodans (strain ATCC 43989 / DSM 5975 / JCM 20966 / LMG 6465 / NBRC 14845 / NCIMB 13405 / ORS 571).